A 251-amino-acid chain; its full sequence is Octanoyltransferase (251 aa).

The BPL/LPL catalytic domain maps to 29–251 (AATPNSLWIC…GQKLSSYLAP (223 aa)). 68–75 (RGGQVTYH) is a substrate binding site. Positions 137–174 (ARLRPSPQPSPKGRGSSTPVLLPPLPGEGGGGGGPDPD) are disordered. Residues 184–186 (ALG) and 197–199 (GVA) each bind substrate. Cys-215 acts as the Acyl-thioester intermediate in catalysis.

This sequence belongs to the LipB family.

Its subcellular location is the cytoplasm. It catalyses the reaction octanoyl-[ACP] + L-lysyl-[protein] = N(6)-octanoyl-L-lysyl-[protein] + holo-[ACP] + H(+). It participates in protein modification; protein lipoylation via endogenous pathway; protein N(6)-(lipoyl)lysine from octanoyl-[acyl-carrier-protein]: step 1/2. In terms of biological role, catalyzes the transfer of endogenously produced octanoic acid from octanoyl-acyl-carrier-protein onto the lipoyl domains of lipoate-dependent enzymes. Lipoyl-ACP can also act as a substrate although octanoyl-ACP is likely to be the physiological substrate. The polypeptide is Octanoyltransferase (Polaromonas sp. (strain JS666 / ATCC BAA-500)).